A 735-amino-acid polypeptide reads, in one-letter code: Photosystem I P700 chlorophyll a apoprotein A2 (735 aa).

The next 8 helical transmembrane spans lie at 47–70 (IFASHFGQLSIIFLWTSGNLFHVA), 136–159 (LYNGSLFLSILSALFLLAGWLHLQ), 176–200 (LNHHLSGLFGISSLAWTGHLVHVAI), 274–292 (MAHHHLAIAVIFVLAGHMY), 331–354 (LHFQLGLALASVGTICSLVAQHMY), 370–396 (AALYTHHQYIASFIICGAFAHGAIFFI), 418–440 (AIISHLSWVSLFLGFHTLGLYVH), and 518–536 (FLVHHAIALGLHTTTLILV). The [4Fe-4S] cluster site is built by cysteine 560 and cysteine 569. Helical transmembrane passes span 576–597 (AFYLSIFWSLNTVGWVTFYWHW) and 644–666 (LSVWAWVFLFGHLIYATGFMFLI). Residues histidine 655, methionine 663, and tyrosine 671 each coordinate chlorophyll a. Tryptophan 672 contributes to the phylloquinone binding site. A helical transmembrane segment spans residues 708 to 728 (LVGLVHFSVGYIFTYAAFLIA).

Belongs to the PsaA/PsaB family. The PsaA/B heterodimer binds the P700 chlorophyll special pair and subsequent electron acceptors. PSI consists of a core antenna complex that captures photons, and an electron transfer chain that converts photonic excitation into a charge separation. The eukaryotic PSI reaction center is composed of at least 11 subunits. Requires P700 is a chlorophyll a/chlorophyll a' dimer, A0 is one or more chlorophyll a, A1 is one or both phylloquinones and FX is a shared 4Fe-4S iron-sulfur center. as cofactor.

Its subcellular location is the plastid. The protein localises to the chloroplast thylakoid membrane. It catalyses the reaction reduced [plastocyanin] + hnu + oxidized [2Fe-2S]-[ferredoxin] = oxidized [plastocyanin] + reduced [2Fe-2S]-[ferredoxin]. Functionally, psaA and PsaB bind P700, the primary electron donor of photosystem I (PSI), as well as the electron acceptors A0, A1 and FX. PSI is a plastocyanin/cytochrome c6-ferredoxin oxidoreductase, converting photonic excitation into a charge separation, which transfers an electron from the donor P700 chlorophyll pair to the spectroscopically characterized acceptors A0, A1, FX, FA and FB in turn. Oxidized P700 is reduced on the lumenal side of the thylakoid membrane by plastocyanin or cytochrome c6. The polypeptide is Photosystem I P700 chlorophyll a apoprotein A2 (Stigeoclonium helveticum (Green alga)).